A 399-amino-acid polypeptide reads, in one-letter code: Acetate kinase (399 aa).

Asn-7 contributes to the Mg(2+) binding site. An ATP-binding site is contributed by Lys-14. Arg-91 contributes to the substrate binding site. The Proton donor/acceptor role is filled by Asp-148. Residues 208–212, 283–285, and 331–335 contribute to the ATP site; these read HLGNG, DFR, and GLGEN. Glu-384 is a Mg(2+) binding site.

The protein belongs to the acetokinase family. Homodimer. It depends on Mg(2+) as a cofactor. The cofactor is Mn(2+).

It is found in the cytoplasm. The enzyme catalyses acetate + ATP = acetyl phosphate + ADP. It participates in metabolic intermediate biosynthesis; acetyl-CoA biosynthesis; acetyl-CoA from acetate: step 1/2. Catalyzes the formation of acetyl phosphate from acetate and ATP. Can also catalyze the reverse reaction. This Desulfitobacterium hafniense (strain Y51) protein is Acetate kinase.